Consider the following 430-residue polypeptide: Tol-Pal system protein TolB (430 aa).

An N-terminal signal peptide occupies residues methionine 1 to alanine 26.

This sequence belongs to the TolB family. As to quaternary structure, the Tol-Pal system is composed of five core proteins: the inner membrane proteins TolA, TolQ and TolR, the periplasmic protein TolB and the outer membrane protein Pal. They form a network linking the inner and outer membranes and the peptidoglycan layer.

It localises to the periplasm. Its function is as follows. Part of the Tol-Pal system, which plays a role in outer membrane invagination during cell division and is important for maintaining outer membrane integrity. In Paraburkholderia phytofirmans (strain DSM 17436 / LMG 22146 / PsJN) (Burkholderia phytofirmans), this protein is Tol-Pal system protein TolB.